A 208-amino-acid chain; its full sequence is Protein-L-isoaspartate O-methyltransferase (208 aa).

S59 is a catalytic residue.

It belongs to the methyltransferase superfamily. L-isoaspartyl/D-aspartyl protein methyltransferase family.

It is found in the cytoplasm. The catalysed reaction is [protein]-L-isoaspartate + S-adenosyl-L-methionine = [protein]-L-isoaspartate alpha-methyl ester + S-adenosyl-L-homocysteine. Catalyzes the methyl esterification of L-isoaspartyl residues in peptides and proteins that result from spontaneous decomposition of normal L-aspartyl and L-asparaginyl residues. It plays a role in the repair and/or degradation of damaged proteins. This chain is Protein-L-isoaspartate O-methyltransferase, found in Escherichia fergusonii (strain ATCC 35469 / DSM 13698 / CCUG 18766 / IAM 14443 / JCM 21226 / LMG 7866 / NBRC 102419 / NCTC 12128 / CDC 0568-73).